A 297-amino-acid chain; its full sequence is tRNA pseudouridine synthase B (297 aa).

Asp-44 (nucleophile) is an active-site residue.

This sequence belongs to the pseudouridine synthase TruB family. Type 1 subfamily.

It catalyses the reaction uridine(55) in tRNA = pseudouridine(55) in tRNA. Its function is as follows. Responsible for synthesis of pseudouridine from uracil-55 in the psi GC loop of transfer RNAs. The sequence is that of tRNA pseudouridine synthase B from Corynebacterium glutamicum (strain R).